Reading from the N-terminus, the 273-residue chain is Proteasome subunit beta type-10 (273 aa).

Position 1 is an N-acetylmethionine (methionine 1). The propeptide at 1-39 (MLKQAVEPTGGFSFENCQRNASLEHVLPGLRVPHARKTG) is removed in mature form. Threonine 40 serves as the catalytic Nucleophile.

This sequence belongs to the peptidase T1B family. The 26S proteasome consists of a 20S proteasome core and two 19S regulatory subunits. The 20S proteasome core is composed of 28 subunits that are arranged in four stacked rings, resulting in a barrel-shaped structure. The two end rings are each formed by seven alpha subunits, and the two central rings are each formed by seven beta subunits. The catalytic chamber with the active sites is on the inside of the barrel. Component of the immunoproteasome, where it displaces the equivalent housekeeping subunit PSMB7. Component of the spermatoproteasome, a form of the proteasome specifically found in testis. Post-translationally, autocleaved. The resulting N-terminal Thr residue of the mature subunit is responsible for the nucleophile proteolytic activity. Detected in liver (at protein level).

It localises to the cytoplasm. Its subcellular location is the nucleus. The enzyme catalyses Cleavage of peptide bonds with very broad specificity.. Its function is as follows. The proteasome is a multicatalytic proteinase complex which is characterized by its ability to cleave peptides with Arg, Phe, Tyr, Leu, and Glu adjacent to the leaving group at neutral or slightly basic pH. The proteasome has an ATP-dependent proteolytic activity. This subunit is involved in antigen processing to generate class I binding peptides. Plays a role in determining the T-cell repertoire for an antiviral T-cell response. The protein is Proteasome subunit beta type-10 (Psmb10) of Mus musculus (Mouse).